The following is a 430-amino-acid chain: Adenylosuccinate synthetase (430 aa).

Residues 12 to 18 (GDEGKGK) and 40 to 42 (GHT) contribute to the GTP site. Asp-13 (proton acceptor) is an active-site residue. Asp-13 and Gly-40 together coordinate Mg(2+). Residues 13–16 (DEGK), 38–41 (NAGH), Thr-130, Arg-144, Gln-224, Thr-239, and Arg-303 each bind IMP. His-41 functions as the Proton donor in the catalytic mechanism. 299–305 (VNTGRKR) lines the substrate pocket. GTP contacts are provided by residues Arg-305, 331–333 (KLD), and 413–415 (STS).

This sequence belongs to the adenylosuccinate synthetase family. As to quaternary structure, homodimer. The cofactor is Mg(2+).

It is found in the cytoplasm. It catalyses the reaction IMP + L-aspartate + GTP = N(6)-(1,2-dicarboxyethyl)-AMP + GDP + phosphate + 2 H(+). Its pathway is purine metabolism; AMP biosynthesis via de novo pathway; AMP from IMP: step 1/2. Its function is as follows. Plays an important role in the de novo pathway of purine nucleotide biosynthesis. Catalyzes the first committed step in the biosynthesis of AMP from IMP. The polypeptide is Adenylosuccinate synthetase (Rhodopseudomonas palustris (strain BisA53)).